The chain runs to 841 residues: DNA ligase (841 aa).

Residues 33–37 (DAQYD), 82–83 (SL), and Glu114 contribute to the NAD(+) site. The N6-AMP-lysine intermediate role is filled by Lys116. The NAD(+) site is built by Arg137, Glu174, Lys300, and Lys324. Cys418, Cys421, Cys436, and Cys442 together coordinate Zn(2+). The 84-residue stretch at 758–841 (EKTGPLDGQT…AFLGEHGQQR (84 aa)) folds into the BRCT domain.

The protein belongs to the NAD-dependent DNA ligase family. LigA subfamily. Requires Mg(2+) as cofactor. Mn(2+) is required as a cofactor.

The enzyme catalyses NAD(+) + (deoxyribonucleotide)n-3'-hydroxyl + 5'-phospho-(deoxyribonucleotide)m = (deoxyribonucleotide)n+m + AMP + beta-nicotinamide D-nucleotide.. DNA ligase that catalyzes the formation of phosphodiester linkages between 5'-phosphoryl and 3'-hydroxyl groups in double-stranded DNA using NAD as a coenzyme and as the energy source for the reaction. It is essential for DNA replication and repair of damaged DNA. The polypeptide is DNA ligase (Xanthomonas oryzae pv. oryzae (strain KACC10331 / KXO85)).